A 120-amino-acid chain; its full sequence is Large ribosomal subunit protein bL12 (120 aa).

Belongs to the bacterial ribosomal protein bL12 family. As to quaternary structure, homodimer. Part of the ribosomal stalk of the 50S ribosomal subunit. Forms a multimeric L10(L12)X complex, where L10 forms an elongated spine to which 2 to 4 L12 dimers bind in a sequential fashion. Binds GTP-bound translation factors.

In terms of biological role, forms part of the ribosomal stalk which helps the ribosome interact with GTP-bound translation factors. Is thus essential for accurate translation. The sequence is that of Large ribosomal subunit protein bL12 from Listeria welshimeri serovar 6b (strain ATCC 35897 / DSM 20650 / CCUG 15529 / CIP 8149 / NCTC 11857 / SLCC 5334 / V8).